We begin with the raw amino-acid sequence, 237 residues long: Phosphoribosylaminoimidazole-succinocarboxamide synthase (237 aa).

Belongs to the SAICAR synthetase family.

The enzyme catalyses 5-amino-1-(5-phospho-D-ribosyl)imidazole-4-carboxylate + L-aspartate + ATP = (2S)-2-[5-amino-1-(5-phospho-beta-D-ribosyl)imidazole-4-carboxamido]succinate + ADP + phosphate + 2 H(+). Its pathway is purine metabolism; IMP biosynthesis via de novo pathway; 5-amino-1-(5-phospho-D-ribosyl)imidazole-4-carboxamide from 5-amino-1-(5-phospho-D-ribosyl)imidazole-4-carboxylate: step 1/2. The sequence is that of Phosphoribosylaminoimidazole-succinocarboxamide synthase from Pseudomonas fluorescens (strain ATCC BAA-477 / NRRL B-23932 / Pf-5).